A 314-amino-acid chain; its full sequence is Probable cell division protein WhiA (314 aa).

Positions 274-308 form a DNA-binding region, H-T-H motif; the sequence is SLKELGEMVSTGPISKSGMNHRLRKLNELADKIRN.

The protein belongs to the WhiA family.

Its function is as follows. Involved in cell division and chromosome segregation. This chain is Probable cell division protein WhiA, found in Staphylococcus epidermidis (strain ATCC 35984 / DSM 28319 / BCRC 17069 / CCUG 31568 / BM 3577 / RP62A).